Consider the following 90-residue polypeptide: 10.1 kDa protein (90 aa).

In Pseudomonas aeruginosa (Bacteriophage Pf1), this protein is 10.1 kDa protein.